The sequence spans 147 residues: Transcriptional regulator MraZ (147 aa).

SpoVT-AbrB domains are found at residues 6 to 48 (NFER…NSEE) and 77 to 120 (TVEV…SKAK).

This sequence belongs to the MraZ family. In terms of assembly, forms oligomers.

The protein resides in the cytoplasm. The protein localises to the nucleoid. This is Transcriptional regulator MraZ from Mycoplasmopsis pulmonis (strain UAB CTIP) (Mycoplasma pulmonis).